A 1042-amino-acid polypeptide reads, in one-letter code: MDKILEGLVSSSHPLPLKRVIVRKVVESAEHWLDEAQCEAMFDLTTRLILEGQDPFQRQVGHQVLEAYARYHRPEFESFFNKTFVLGLLHQGYHSLDRKDVAILDYIHNGLKLIMSCPSVLDLFSLLQVEVLRMVCERPEPQLCARLSDLLTDFVQCIPKGKLSITFCQQLVRTIGHFQCVSTQERELREYVSQVTKVSNLLQNIWKAEPATLLPSLQEVFASISSTDASFEPSVALASLVQHIPLQMITVLIRSLTTDPNVKDASMTQALCRMIDWLSWPLAQHVDTWVIALLKGLAAVQKFTILIDVTLLKIELVFNRLWFPLVRPGALAVLSHMLLSFQHSPEAFHLIVPHVVNLVHSFKNDGLPSSTAFLVQLTELIHCMMYHYSGFPDLYEPILEAIKDFPKPSEEKIKLILNQSAWTSQSNSLASCLSRLSGKSETGKTGLINLGNTCYMNSVIQALFMATDFRRQVLSLNLNGCNSLMKKLQHLFAFLAHTQREAYAPRIFFEASRPPWFTPRSQQDCSEYLRFLLDRLHEEEKILKVQASHKPSEILECSETSLQEVASKAAVLTETPRTSDGEKTLIEKMFGGKLRTHIRCLNCRSTSQKVEAFTDLSLAFCPSSSLENMSVQDPASSPSIQDGGLMQASVPGPSEEPVVYNPTTAAFICDSLVNEKTIGSPPNEFYCSENTSVPNESNKILVNKDVPQKPGGETTPSVTDLLNYFLAPEILTGDNQYYCENCASLQNAEKTMQITEEPEYLILTLLRFSYDQKYHVRRKILDNVSLPLVLELPVKRITSFSSLSESWSVDVDFTDLSENLAKKLKPSGTDEASCTKLVPYLLSSVVVHSGISSESGHYYSYARNITSTDSSYQMYHQSEALALASSQSHLLGRDSPSAVFEQDLENKEMSKEWFLFNDSRVTFTSFQSVQKITSRFPKDTAYVLLYKKQHSTNGLSGNNPTSGLWINGDPPLQKELMDAITKDNKLYLQEQELNARARALQAASASCSFRPNGFDDNDPPGSCGPTGGGGGGGFNTVGRLVF.

The region spanning 445–949 (TGLINLGNTC…TAYVLLYKKQ (505 aa)) is the USP domain. Residue cysteine 454 is the Nucleophile of the active site. Catalysis depends on histidine 857, which acts as the Proton acceptor.

It belongs to the peptidase C19 family. As to quaternary structure, interacts with isoform 1 of FBXW7; this interaction prevents FBXW7-mediated degradation of MYC. In terms of tissue distribution, highly expressed in skeletal muscle. Expressed in adrenal gland.

The protein resides in the cytoplasm. Its subcellular location is the nucleus. It catalyses the reaction Thiol-dependent hydrolysis of ester, thioester, amide, peptide and isopeptide bonds formed by the C-terminal Gly of ubiquitin (a 76-residue protein attached to proteins as an intracellular targeting signal).. Its function is as follows. Deubiquitinating enzyme that plays a role in various cellular processes, including DNA repair, cell cycle regulation, and immune response. Plays a role in the inhibition of type I interferon signaling by mediating the 'Lys-33' to 'Lys-48' ubiquitination transition of TBK1 leading to its degradation. Cleaves the ubiquitin chain from the histone demethylase LSD1/KDM1A and prevents it from degradation by the 26S proteasome, thus maintaining LSD1 protein level in cells. Plays a role in the DNA damage response by regulating the deacetylase activity of HDAC1. Mechanistically, removes the 'Lys-63'-linked ubiquitin chain promoting the deacetylase activity of HDAC1 in response to DNA damage. Also acts as a specific deubiquitinase of histone deacetylase 3/HDAC3 and cleaves its 'Lys-63'-linked ubiquitin chains to lower its histone deacetylase activity. Regulates MYC levels and cell proliferation via antagonizing ubiquitin E3 ligase FBXW7 thereby preventing MYC 'Lys-48'-linked ubiquitination and degradation. Participates in antiviral response by removing both 'Lys-48'-linked and 'Lys-63'-linked polyubiquitination of Zika virus envelope protein E. Constitutively associated with IL-33R/IL1RL1, deconjugates its 'Lys-27'-linked polyubiquitination resulting in its autophagic degradation. The sequence is that of Ubiquitin carboxyl-terminal hydrolase 38 (USP38) from Homo sapiens (Human).